We begin with the raw amino-acid sequence, 649 residues long: Acetyl-coenzyme A synthetase (649 aa).

CoA contacts are provided by residues 191 to 194 (RAGR), threonine 311, and asparagine 335. ATP-binding positions include 387–389 (GEP), 411–416 (DTWWQT), aspartate 500, and arginine 515. Residue serine 523 participates in CoA binding. Arginine 526 is an ATP binding site. 3 residues coordinate Mg(2+): valine 537, phenylalanine 539, and isoleucine 542. Arginine 584 is a CoA binding site. N6-acetyllysine is present on lysine 609.

It belongs to the ATP-dependent AMP-binding enzyme family. It depends on Mg(2+) as a cofactor. In terms of processing, acetylated. Deacetylation by the SIR2-homolog deacetylase activates the enzyme.

It carries out the reaction acetate + ATP + CoA = acetyl-CoA + AMP + diphosphate. Functionally, catalyzes the conversion of acetate into acetyl-CoA (AcCoA), an essential intermediate at the junction of anabolic and catabolic pathways. AcsA undergoes a two-step reaction. In the first half reaction, AcsA combines acetate with ATP to form acetyl-adenylate (AcAMP) intermediate. In the second half reaction, it can then transfer the acetyl group from AcAMP to the sulfhydryl group of CoA, forming the product AcCoA. In Photobacterium profundum (strain SS9), this protein is Acetyl-coenzyme A synthetase.